The chain runs to 126 residues: Protein ApaG (126 aa).

An ApaG domain is found at 2-126; it reads SDPRYQIDVS…FRLAVPGALH (125 aa).

In Ectopseudomonas mendocina (strain ymp) (Pseudomonas mendocina), this protein is Protein ApaG.